The sequence spans 763 residues: Phosphoglycerol transferase I (763 aa).

The next 4 helical transmembrane spans lie at 1 to 21 (MSEL…AWKA), 26 to 46 (WWFA…ITLY), 77 to 97 (ILPG…LGWV), and 108 to 128 (VGYS…SPAF).

Belongs to the OpgB family.

It is found in the cell inner membrane. The enzyme catalyses a phosphatidylglycerol + a membrane-derived-oligosaccharide D-glucose = a 1,2-diacyl-sn-glycerol + a membrane-derived-oligosaccharide 6-(glycerophospho)-D-glucose.. The protein operates within glycan metabolism; osmoregulated periplasmic glucan (OPG) biosynthesis. In terms of biological role, transfers a phosphoglycerol residue from phosphatidylglycerol to the membrane-bound nascent glucan backbones. The sequence is that of Phosphoglycerol transferase I from Salmonella schwarzengrund (strain CVM19633).